The chain runs to 384 residues: PqqA peptide cyclase (384 aa).

A Radical SAM core domain is found at 14 to 226; it reads IPAPVGLLAE…IRIVEAARER (213 aa). Residues C28, C32, and C35 each contribute to the [4Fe-4S] cluster site.

This sequence belongs to the radical SAM superfamily. PqqE family. Interacts with PqqD. The interaction is necessary for activity of PqqE. The cofactor is [4Fe-4S] cluster.

The catalysed reaction is [PQQ precursor protein] + S-adenosyl-L-methionine = E-Y cross-linked-[PQQ precursor protein] + 5'-deoxyadenosine + L-methionine + H(+). It participates in cofactor biosynthesis; pyrroloquinoline quinone biosynthesis. In terms of biological role, catalyzes the cross-linking of a glutamate residue and a tyrosine residue in the PqqA protein as part of the biosynthesis of pyrroloquinoline quinone (PQQ). The protein is PqqA peptide cyclase of Methylorubrum populi (strain ATCC BAA-705 / NCIMB 13946 / BJ001) (Methylobacterium populi).